We begin with the raw amino-acid sequence, 269 residues long: MSRLQNRFAELKAENRAALVTFVTAGDPDYATSLSILKGLPEAGADVIELGMPFTDPMADGPAIQLANIRALAGKQGMQQTLQMVREFRAGNQSTPLVLMGYYNPIFVYGVERFISDAKEAGVDGLIVVDLPPEHNDELCEPAQSAGLDFIRLTTPTTDDDRLPTVLAGSSGFVYYVSVAGVTGAGAATLDHVEEAVARLRRHTDLPVCIGFGIRTPEHAAEVAKRAEGAVVGSALIDKIAEAKSPQQAIDGVLGLCRELAEGVRGARR.

Active-site proton acceptor residues include E49 and D60.

The protein belongs to the TrpA family. As to quaternary structure, tetramer of two alpha and two beta chains.

The catalysed reaction is (1S,2R)-1-C-(indol-3-yl)glycerol 3-phosphate + L-serine = D-glyceraldehyde 3-phosphate + L-tryptophan + H2O. It participates in amino-acid biosynthesis; L-tryptophan biosynthesis; L-tryptophan from chorismate: step 5/5. Functionally, the alpha subunit is responsible for the aldol cleavage of indoleglycerol phosphate to indole and glyceraldehyde 3-phosphate. This Ectopseudomonas mendocina (strain ymp) (Pseudomonas mendocina) protein is Tryptophan synthase alpha chain.